Consider the following 358-residue polypeptide: Phenylalanine--tRNA ligase alpha subunit (358 aa).

Glutamate 258 lines the Mg(2+) pocket.

Belongs to the class-II aminoacyl-tRNA synthetase family. Phe-tRNA synthetase alpha subunit type 1 subfamily. In terms of assembly, tetramer of two alpha and two beta subunits. It depends on Mg(2+) as a cofactor.

The protein resides in the cytoplasm. The catalysed reaction is tRNA(Phe) + L-phenylalanine + ATP = L-phenylalanyl-tRNA(Phe) + AMP + diphosphate + H(+). This is Phenylalanine--tRNA ligase alpha subunit from Rhodospirillum rubrum (strain ATCC 11170 / ATH 1.1.1 / DSM 467 / LMG 4362 / NCIMB 8255 / S1).